The chain runs to 288 residues: Type II iodothyronine deiodinase (288 aa).

Residues 1-5 (MPHVN) lie on the Lumenal side of the membrane. The helical; Signal-anchor for type III membrane protein transmembrane segment at 6 to 26 (LLVVLLILPGVFSNCLFLALY) threads the bilayer. Topologically, residues 27–288 (DAVSFLRRAL…SFLESVKASR (262 aa)) are cytoplasmic. Residues 99–130 (SCAASSSSSHETPTPRTTAEAAATVTTSTTTT) form a disordered region. Selenocysteine 160 is an active-site residue. Selenocysteine 160 is a non-standard amino acid (selenocysteine).

The protein belongs to the iodothyronine deiodinase family. Predominantly monomer. Can form homodimers but homodimerization is not essential for enzyme activity. Expressed in intestine, liver, kidney and brain of immediately premetamorphic larvae, of larvae in all stages of metamorphosis and of parasitic feeding juveniles. In immediately premetamorphic larvae, levels are significantly higher in intestine and liver than in kidney and brain.

It is found in the endoplasmic reticulum membrane. It catalyses the reaction 3,3',5-triiodo-L-thyronine + iodide + A + H(+) = L-thyroxine + AH2. It carries out the reaction 3,3'-diiodo-L-thyronine + iodide + A + H(+) = 3,3',5'-triiodo-L-thyronine + AH2. The enzyme catalyses 3'-iodo-L-thyronine + iodide + A + H(+) = 3',5'-diiodo-L-thyronine + AH2. The catalysed reaction is 3,3'-diiodothyronamine + iodide + A + H(+) = 3,3',5'-triiodothyronamine + AH2. It catalyses the reaction 3'-iodothyronamine + iodide + A + H(+) = 3',5'-diiodothyronamine + AH2. Plays a crucial role in the metabolism of thyroid hormones (TH) and has specific roles in TH activation and inactivation by deiodination. Catalyzes the deiodination of L-thyroxine (T4) to 3,5,3'-triiodothyronine (T3), 3,3',5'-triiodothyronine (rT3) to 3,3'-diiodothyronine (3,3'-T2) and 3',5'-diiodothyronine (3',5'-T2) to 3'-monoiodothyronine (3'-T1) via outer-ring deiodination (ORD). Catalyzes the phenolic ring deiodinations of 3,3',5'-triiodothyronamine and 3',5'- diiodothyronamine. This chain is Type II iodothyronine deiodinase, found in Petromyzon marinus (Sea lamprey).